The sequence spans 130 residues: Small ribosomal subunit protein uS11c (130 aa).

It belongs to the universal ribosomal protein uS11 family. Part of the 30S ribosomal subunit.

The protein resides in the plastid. This is Small ribosomal subunit protein uS11c from Aneura mirabilis (Parasitic liverwort).